Consider the following 216-residue polypeptide: Large ribosomal subunit protein bL25 (216 aa).

Positions 191 to 216 (LVSAESEEDEDAPAADEVPATEVSEE) are disordered. A compositionally biased stretch (acidic residues) spans 195-204 (ESEEDEDAPA).

This sequence belongs to the bacterial ribosomal protein bL25 family. CTC subfamily. Part of the 50S ribosomal subunit; part of the 5S rRNA/L5/L18/L25 subcomplex. Contacts the 5S rRNA. Binds to the 5S rRNA independently of L5 and L18.

Functionally, this is one of the proteins that binds to the 5S RNA in the ribosome where it forms part of the central protuberance. The chain is Large ribosomal subunit protein bL25 from Jannaschia sp. (strain CCS1).